A 248-amino-acid polypeptide reads, in one-letter code: MAGHSQFKNIMHRKGRVDAVRSKVFGKLAREITVAAKLGVPDPAMNPRLRAAMLAARAENMPKDNIERAIKKATGGEGENYEEIRYEGYGPGGAALIVEAQTDNRNRTASDVRSAFTKAGGSLAETGAVSFMFDRVGLVAFDAKVADADAMLEAAIEAGADDVKSDESGHEVTCEHGALGEVAKALEARFGEPRRTALVWRPQNTVEVDDETGEKLIRLVEMIEDQDDVQNVFVNFAVSDALMARMQD.

This sequence belongs to the TACO1 family.

It is found in the cytoplasm. The sequence is that of Probable transcriptional regulatory protein M446_6579 from Methylobacterium sp. (strain 4-46).